The sequence spans 257 residues: Snake venom serine protease KN2 (257 aa).

Positions 1 to 18 (MVLIRVLANLLILQLSYA) are cleaved as a signal peptide. A propeptide spanning residues 19–24 (QKSSEL) is cleaved from the precursor. The region spanning 25–248 (VIGGHPCNIN…HLDWIKSIIA (224 aa)) is the Peptidase S1 domain. Intrachain disulfides connect Cys31–Cys162, Cys49–Cys65, Cys97–Cys255, Cys141–Cys209, Cys173–Cys188, and Cys199–Cys224. Residues His64 and Asp109 each act as charge relay system in the active site. 2 N-linked (GlcNAc...) asparagine glycosylation sites follow: Asn120 and Asn121. Residue Ser203 is the Charge relay system of the active site.

It belongs to the peptidase S1 family. Snake venom subfamily. Monomer. In terms of tissue distribution, expressed by the venom gland.

It localises to the secreted. Functionally, snake venom serine protease that may act in the hemostasis system of the prey. The polypeptide is Snake venom serine protease KN2 (Trimeresurus stejnegeri (Chinese green tree viper)).